A 183-amino-acid polypeptide reads, in one-letter code: GMP synthase [glutamine-hydrolyzing] subunit A (183 aa).

The Glutamine amidotransferase type-1 domain occupies 3–183 (HILVVDNHGQ…VFENFVAICE (181 aa)). Cysteine 74 (nucleophile) is an active-site residue. Active-site residues include histidine 162 and glutamate 164.

Heterodimer composed of a glutamine amidotransferase subunit (A) and a GMP-binding subunit (B).

The catalysed reaction is XMP + L-glutamine + ATP + H2O = GMP + L-glutamate + AMP + diphosphate + 2 H(+). The protein operates within purine metabolism; GMP biosynthesis; GMP from XMP (L-Gln route): step 1/1. In terms of biological role, catalyzes the synthesis of GMP from XMP. The polypeptide is GMP synthase [glutamine-hydrolyzing] subunit A (Halobacterium salinarum (strain ATCC 700922 / JCM 11081 / NRC-1) (Halobacterium halobium)).